A 64-amino-acid chain; its full sequence is Large ribosomal subunit protein uL30 (64 aa).

Positions 1-22 are disordered; that stretch reads MAKAAKTIKVEQTRSAIRRQHS.

It belongs to the universal ribosomal protein uL30 family. In terms of assembly, part of the 50S ribosomal subunit.

This Nitrobacter hamburgensis (strain DSM 10229 / NCIMB 13809 / X14) protein is Large ribosomal subunit protein uL30.